We begin with the raw amino-acid sequence, 251 residues long: Adenosine 5'-phosphosulfate reductase (251 aa).

Residues Cys121, Cys122, Cys204, and Cys207 each coordinate [4Fe-4S] cluster. The Nucleophile; cysteine thiosulfonate intermediate role is filled by Cys232.

This sequence belongs to the PAPS reductase family. CysH subfamily. Requires [4Fe-4S] cluster as cofactor.

The protein resides in the cytoplasm. It carries out the reaction [thioredoxin]-disulfide + sulfite + AMP + 2 H(+) = adenosine 5'-phosphosulfate + [thioredoxin]-dithiol. It participates in sulfur metabolism; hydrogen sulfide biosynthesis; sulfite from sulfate. Functionally, catalyzes the formation of sulfite from adenosine 5'-phosphosulfate (APS) using thioredoxin as an electron donor. The sequence is that of Adenosine 5'-phosphosulfate reductase from Sinorhizobium fredii (strain NBRC 101917 / NGR234).